The primary structure comprises 135 residues: MAKAPVKAGKKKSFKKKEKRVVHTGVVHIQATFNNTIVTISDQEGNTISWSSAGSLGFRGSRKGTPFAAQQAAMTAANKANETGLRVVEVRVSGPGSGRESAVRALSTAGIEVRAIKDVTPIPHNGCRPPKKRRV.

The protein belongs to the universal ribosomal protein uS11 family. As to quaternary structure, part of the 30S ribosomal subunit. Interacts with proteins S7 and S18. Binds to IF-3.

Its function is as follows. Located on the platform of the 30S subunit, it bridges several disparate RNA helices of the 16S rRNA. Forms part of the Shine-Dalgarno cleft in the 70S ribosome. This Solibacter usitatus (strain Ellin6076) protein is Small ribosomal subunit protein uS11.